The chain runs to 318 residues: HPr kinase/phosphorylase (318 aa).

Catalysis depends on residues histidine 143 and lysine 164. 158 to 165 (GKSGVGKS) provides a ligand contact to ATP. Residue serine 165 participates in Mg(2+) binding. Aspartate 182 (proton acceptor; for phosphorylation activity. Proton donor; for dephosphorylation activity) is an active-site residue. Positions 206–215 (MEIRGLGILN) are important for the catalytic mechanism of both phosphorylation and dephosphorylation. Glutamate 207 is a binding site for Mg(2+). Residue arginine 248 is part of the active site. Residues 269-274 (PVKPGR) are important for the catalytic mechanism of dephosphorylation.

This sequence belongs to the HPrK/P family. Homohexamer. Requires Mg(2+) as cofactor.

It carries out the reaction [HPr protein]-L-serine + ATP = [HPr protein]-O-phospho-L-serine + ADP + H(+). The catalysed reaction is [HPr protein]-O-phospho-L-serine + phosphate + H(+) = [HPr protein]-L-serine + diphosphate. Catalyzes the ATP- as well as the pyrophosphate-dependent phosphorylation of a specific serine residue in HPr, a phosphocarrier protein of the phosphoenolpyruvate-dependent sugar phosphotransferase system (PTS). HprK/P also catalyzes the pyrophosphate-producing, inorganic phosphate-dependent dephosphorylation (phosphorolysis) of seryl-phosphorylated HPr (P-Ser-HPr). This is HPr kinase/phosphorylase from Leptospira borgpetersenii serovar Hardjo-bovis (strain JB197).